The sequence spans 30 residues: Ornithine carbamoyltransferase, catabolic (30 aa).

The protein belongs to the aspartate/ornithine carbamoyltransferase superfamily. OTCase family.

It localises to the cytoplasm. It catalyses the reaction carbamoyl phosphate + L-ornithine = L-citrulline + phosphate + H(+). It functions in the pathway amino-acid degradation; L-arginine degradation via ADI pathway; carbamoyl phosphate from L-arginine: step 2/2. This is Ornithine carbamoyltransferase, catabolic (arcB) from Aeromonas caviae (Aeromonas punctata).